A 323-amino-acid chain; its full sequence is Beta-ketoacyl-[acyl-carrier-protein] synthase III (323 aa).

Active-site residues include C113 and H250. The ACP-binding stretch occupies residues 251-255; sequence QANKR. Residue N280 is part of the active site.

This sequence belongs to the thiolase-like superfamily. FabH family. Homodimer.

The protein resides in the cytoplasm. It carries out the reaction malonyl-[ACP] + acetyl-CoA + H(+) = 3-oxobutanoyl-[ACP] + CO2 + CoA. The protein operates within lipid metabolism; fatty acid biosynthesis. In terms of biological role, catalyzes the condensation reaction of fatty acid synthesis by the addition to an acyl acceptor of two carbons from malonyl-ACP. Catalyzes the first condensation reaction which initiates fatty acid synthesis and may therefore play a role in governing the total rate of fatty acid production. Possesses both acetoacetyl-ACP synthase and acetyl transacylase activities. Its substrate specificity determines the biosynthesis of branched-chain and/or straight-chain of fatty acids. This chain is Beta-ketoacyl-[acyl-carrier-protein] synthase III, found in Brucella melitensis biotype 2 (strain ATCC 23457).